Consider the following 497-residue polypeptide: Cytosol aminopeptidase (497 aa).

The Mn(2+) site is built by Lys-267 and Asp-272. The active site involves Lys-279. Residues Asp-290, Asp-349, and Glu-351 each contribute to the Mn(2+) site. Arg-353 is a catalytic residue.

Belongs to the peptidase M17 family. Mn(2+) serves as cofactor.

The protein resides in the cytoplasm. The enzyme catalyses Release of an N-terminal amino acid, Xaa-|-Yaa-, in which Xaa is preferably Leu, but may be other amino acids including Pro although not Arg or Lys, and Yaa may be Pro. Amino acid amides and methyl esters are also readily hydrolyzed, but rates on arylamides are exceedingly low.. It carries out the reaction Release of an N-terminal amino acid, preferentially leucine, but not glutamic or aspartic acids.. Its function is as follows. Presumably involved in the processing and regular turnover of intracellular proteins. Catalyzes the removal of unsubstituted N-terminal amino acids from various peptides. The protein is Cytosol aminopeptidase (pepA) of Pseudomonas putida (Arthrobacter siderocapsulatus).